Here is a 210-residue protein sequence, read N- to C-terminus: Cytochrome c biogenesis ATP-binding export protein CcmA (210 aa).

In terms of domain architecture, ABC transporter spans 4–207 (LAVRDLAVAR…RQSRPAGFNE (204 aa)). Residue 36–43 (GPNGIGKT) participates in ATP binding.

The protein belongs to the ABC transporter superfamily. CcmA exporter (TC 3.A.1.107) family. As to quaternary structure, the complex is composed of two ATP-binding proteins (CcmA) and two transmembrane proteins (CcmB).

The protein localises to the cell inner membrane. The catalysed reaction is heme b(in) + ATP + H2O = heme b(out) + ADP + phosphate + H(+). In terms of biological role, part of the ABC transporter complex CcmAB involved in the biogenesis of c-type cytochromes; once thought to export heme, this seems not to be the case, but its exact role is uncertain. Responsible for energy coupling to the transport system. This is Cytochrome c biogenesis ATP-binding export protein CcmA from Paracoccus denitrificans (strain Pd 1222).